Consider the following 131-residue polypeptide: UPF0134 protein MPN_010 (131 aa).

It belongs to the UPF0134 family.

This chain is UPF0134 protein MPN_010, found in Mycoplasma pneumoniae (strain ATCC 29342 / M129 / Subtype 1) (Mycoplasmoides pneumoniae).